The chain runs to 847 residues: Nitrite reductase (NADH) large subunit (847 aa).

Tyrosine 44–glycine 79 provides a ligand contact to FAD. NAD(+) is bound at residue leucine 193–arginine 225. Cysteine 425, cysteine 427, cysteine 459, and cysteine 462 together coordinate [2Fe-2S] cluster. [4Fe-4S] cluster is bound by residues cysteine 641, cysteine 647, cysteine 681, and cysteine 685. Cysteine 685 provides a ligand contact to siroheme.

The protein belongs to the nitrite and sulfite reductase 4Fe-4S domain family. In terms of assembly, homodimer which associates with NirD. Requires siroheme as cofactor. It depends on [2Fe-2S] cluster as a cofactor. The cofactor is [4Fe-4S] cluster. FAD serves as cofactor.

It carries out the reaction NH4(+) + 3 NAD(+) + 2 H2O = nitrite + 3 NADH + 5 H(+). Its pathway is nitrogen metabolism; nitrate reduction (assimilation). The polypeptide is Nitrite reductase (NADH) large subunit (nirB) (Escherichia coli (strain K12)).